The primary structure comprises 143 residues: Putative cytokinin riboside 5'-monophosphate phosphoribohydrolase LOG9 (143 aa).

Substrate-binding positions include 23-24 (RK), 41-47 (RYETMEE), and Thr-53.

The protein belongs to the LOG family.

It catalyses the reaction N(6)-(dimethylallyl)adenosine 5'-phosphate + H2O = N(6)-dimethylallyladenine + D-ribose 5-phosphate. The enzyme catalyses 9-ribosyl-trans-zeatin 5'-phosphate + H2O = trans-zeatin + D-ribose 5-phosphate. In terms of biological role, cytokinin-activating enzyme working in the direct activation pathway. Phosphoribohydrolase that converts inactive cytokinin nucleotides to the biologically active free-base forms. The protein is Putative cytokinin riboside 5'-monophosphate phosphoribohydrolase LOG9 (LOG9) of Arabidopsis thaliana (Mouse-ear cress).